Consider the following 307-residue polypeptide: N-acetylmuramic acid 6-phosphate etherase (307 aa).

Residues 57 to 220 enclose the SIS domain; that stretch reads IIEAFKTNGR…TTASMIGVGK (164 aa). The active-site Proton donor is the Glu-85. The active site involves Glu-116.

Belongs to the GCKR-like family. MurNAc-6-P etherase subfamily. In terms of assembly, homodimer.

It catalyses the reaction N-acetyl-D-muramate 6-phosphate + H2O = N-acetyl-D-glucosamine 6-phosphate + (R)-lactate. Its pathway is amino-sugar metabolism; N-acetylmuramate degradation. Its function is as follows. Specifically catalyzes the cleavage of the D-lactyl ether substituent of MurNAc 6-phosphate, producing GlcNAc 6-phosphate and D-lactate. The chain is N-acetylmuramic acid 6-phosphate etherase from Alkaliphilus metalliredigens (strain QYMF).